Here is a 352-residue protein sequence, read N- to C-terminus: Selenide, water dikinase (352 aa).

Residue cysteine 23 is part of the active site. Residues lysine 26 and 54 to 56 contribute to the ATP site; that span reads SRD. A Mg(2+)-binding site is contributed by aspartate 57. ATP-binding positions include aspartate 74, aspartate 97, and 145–147; that span reads GHS. Aspartate 97 contributes to the Mg(2+) binding site. A Mg(2+)-binding site is contributed by aspartate 233.

Belongs to the selenophosphate synthase 1 family. Class I subfamily. Homodimer. It depends on Mg(2+) as a cofactor.

The enzyme catalyses hydrogenselenide + ATP + H2O = selenophosphate + AMP + phosphate + 2 H(+). In terms of biological role, synthesizes selenophosphate from selenide and ATP. The protein is Selenide, water dikinase of Shewanella baltica (strain OS155 / ATCC BAA-1091).